A 1425-amino-acid chain; its full sequence is Nephrocystin-4 (1425 aa).

Residue serine 145 is modified to Phosphoserine. The disordered stretch occupies residues 448-554 (FSLSSDGPTE…VSHLEADLSQ (107 aa)). Composition is skewed to low complexity over residues 473–484 (PASPSGTPAPAA) and 507–530 (SPLS…SQSP). The tract at residues 822 to 1425 (LTLANVGHAC…ETFCVKVLYQ (604 aa)) is sufficient for basal bodies localization.

This sequence belongs to the NPHP4 family. In terms of assembly, interacts with NPHP1 and RPGRIP1L/NPHP8; NPHP1, NPHP4 and RPGRIP1L are proposed to form a functional NPHP1-4-8 module localized to cell-cell contacts and the ciliary transition zone; NPHP4 mediates the interaction between NPHP1 and RPGRIP1L. Interacts with IQCB1/NPHP5; the interaction likely requires additional interactors. Interacts with RPGRIP1, CEP164, JADE1, PALS1, INADL, PARD6A, INVS, DVL2. Interacts with INTU; INTU mediates the interaction between NPHP4 and DAAM1. Interacts with JADE1. Interacts with SPATA7. In terms of tissue distribution, expressed in the retina (at protein level).

Its subcellular location is the cytoplasm. It is found in the cytoskeleton. It localises to the cilium basal body. The protein localises to the microtubule organizing center. The protein resides in the centrosome. Its subcellular location is the cell junction. It is found in the tight junction. Functionally, involved in the organization of apical junctions; the function is proposed to implicate a NPHP1-4-8 module. Does not seem to be strictly required for ciliogenesis. Required for building functional cilia. Involved in the organization of the subapical actin network in multiciliated epithelial cells. Seems to recruit INT to basal bodies of motile cilia which subsequently interacts with actin-modifying proteins such as DAAM1. In cooperation with INVS may down-regulate the canonical Wnt pathway and promote the Wnt-PCP pathway by regulating expression and subcellular location of disheveled proteins. Stabilizes protein levels of JADE1 and promotes its translocation to the nucleus leading to cooperative inhibition of canonical Wnt signaling. Acts as negative regulator of the hippo pathway by association with LATS1 and modifying LATS1-dependent phosphorylation and localization of WWTR1/TAZ. The chain is Nephrocystin-4 (Nphp4) from Mus musculus (Mouse).